Consider the following 130-residue polypeptide: Histone H2B.1 (130 aa).

Residues 1 to 19 (MAPKAEKKPASKAPAEKKP) are compositionally biased toward basic and acidic residues. A disordered region spans residues 1 to 39 (MAPKAEKKPASKAPAEKKPAAKKTASATGTKKRSKTRKE). N6-acetyllysine; alternate occurs at positions 7 and 8. Glycyl lysine isopeptide (Lys-Gly) (interchain with G-Cter in SUMO); alternate cross-links involve residues Lys-7 and Lys-8. Ser-11 is modified (phosphoserine). Residue Lys-12 is modified to N6-acetyllysine. Lys-17 carries the N6-acetyllysine; alternate modification. Lys-17 is covalently cross-linked (Glycyl lysine isopeptide (Lys-Gly) (interchain with G-Cter in SUMO); alternate). Residue Lys-18 forms a Glycyl lysine isopeptide (Lys-Gly) (interchain with G-Cter in SUMO) linkage. A Glycyl lysine isopeptide (Lys-Gly) (interchain with G-Cter in ubiquitin) cross-link involves residue Lys-124.

This sequence belongs to the histone H2B family. The nucleosome is a histone octamer containing two molecules each of H2A, H2B, H3 and H4 assembled in one H3-H4 heterotetramer and two H2A-H2B heterodimers. The octamer wraps approximately 147 bp of DNA. Monoubiquitinated by the UBC2-BRE1 complex to form H2BK123ub1. H2BK123ub1 gives a specific tag for epigenetic transcriptional activation and is also prerequisite for H3K4me and H3K79me formation. H2BK123ub1 also modulates the formation of double-strand breaks during meiosis and is a prerequisite for DNA-damage checkpoint activation. In terms of processing, phosphorylated by STE20 to form H2BS10ph during progression through meiotic prophase. May be correlated with chromosome condensation. Post-translationally, acetylated by GCN5 to form H2BK11ac and H2BK16ac. H2BK16ac can also be formed by ESA1. Acetylation of N-terminal lysines and particularly formation of H2BK11acK16ac has a positive effect on transcription. Sumoylation to form H2BK6su or H2BK7su, and probably also H2BK16su or H2BK17su, occurs preferentially near the telomeres and represses gene transcription.

Its subcellular location is the nucleus. The protein localises to the chromosome. Its function is as follows. Core component of nucleosome. Nucleosomes wrap and compact DNA into chromatin, limiting DNA accessibility to the cellular machineries which require DNA as a template. Histones thereby play a central role in transcription regulation, DNA repair, DNA replication and chromosomal stability. DNA accessibility is regulated via a complex set of post-translational modifications of histones, also called histone code, and nucleosome remodeling. This chain is Histone H2B.1 (HTB1), found in Debaryomyces hansenii (strain ATCC 36239 / CBS 767 / BCRC 21394 / JCM 1990 / NBRC 0083 / IGC 2968) (Yeast).